We begin with the raw amino-acid sequence, 272 residues long: 2-amino-3,7-dideoxy-D-threo-hept-6-ulosonate synthase (272 aa).

Asp-33 acts as the Proton acceptor in catalysis. 1-deoxy-D-threo-hexo-2,5-diulose 6-phosphate contacts are provided by residues 33-37 and 153-155; these read DHGVS and YPR. Tyr-153 functions as the Proton donor in the catalytic mechanism. Residue Lys-184 is the Schiff-base intermediate with substrate of the active site. Residues 209–210 and 237–238 contribute to the 1-deoxy-D-threo-hexo-2,5-diulose 6-phosphate site; these read GG and GR.

It belongs to the DeoC/FbaB aldolase family. ADHS subfamily. In terms of assembly, homodecamer.

It catalyses the reaction 1-deoxy-D-threo-hexo-2,5-diulose 6-phosphate + L-aspartate 4-semialdehyde = 2,3-dioxopropyl phosphate + 2-amino-2,3,7-trideoxy-D-lyxo-hept-6-ulosonate. Catalyzes a transaldol reaction between 6-deoxy-5-ketofructose 1-phosphate (DKFP) and L-aspartate semialdehyde (ASA) with an elimination of hydroxypyruvaldehyde phosphate to yield 2-amino-3,7-dideoxy-D-threo-hept-6-ulosonate (ADH). Plays a key role in an alternative pathway of the biosynthesis of 3-dehydroquinate (DHQ), which is involved in the canonical pathway for the biosynthesis of aromatic amino acids. The sequence is that of 2-amino-3,7-dideoxy-D-threo-hept-6-ulosonate synthase from Methanococcus vannielii (strain ATCC 35089 / DSM 1224 / JCM 13029 / OCM 148 / SB).